A 141-amino-acid chain; its full sequence is Large ribosomal subunit protein uL11 (141 aa).

The protein belongs to the universal ribosomal protein uL11 family. In terms of assembly, part of the ribosomal stalk of the 50S ribosomal subunit. Interacts with L10 and the large rRNA to form the base of the stalk. L10 forms an elongated spine to which L12 dimers bind in a sequential fashion forming a multimeric L10(L12)X complex. Post-translationally, one or more lysine residues are methylated.

In terms of biological role, forms part of the ribosomal stalk which helps the ribosome interact with GTP-bound translation factors. This chain is Large ribosomal subunit protein uL11, found in Nostoc punctiforme (strain ATCC 29133 / PCC 73102).